A 357-amino-acid chain; its full sequence is GTPase Obg (357 aa).

The Obg domain maps to 1–159 (MKFVDEAFID…KSLKLELKVL (159 aa)). The OBG-type G domain occupies 160–334 (ADVGLLGMPN…LVQSIFQHVH (175 aa)). GTP-binding positions include 166-173 (GMPNAGKS), 191-195 (FTTLH), 213-216 (DIPG), 284-287 (NKLD), and 315-317 (SAL). Residues Ser-173 and Thr-193 each contribute to the Mg(2+) site.

This sequence belongs to the TRAFAC class OBG-HflX-like GTPase superfamily. OBG GTPase family. Monomer. It depends on Mg(2+) as a cofactor.

Its subcellular location is the cytoplasm. In terms of biological role, an essential GTPase which binds GTP, GDP and possibly (p)ppGpp with moderate affinity, with high nucleotide exchange rates and a fairly low GTP hydrolysis rate. Plays a role in control of the cell cycle, stress response, ribosome biogenesis and in those bacteria that undergo differentiation, in morphogenesis control. The sequence is that of GTPase Obg from Acidovorax sp. (strain JS42).